We begin with the raw amino-acid sequence, 702 residues long: Elongation factor G 2 (702 aa).

Positions 8–290 constitute a tr-type G domain; that stretch reads ERYRNIGISA…AVIDYLPSPV (283 aa). GTP contacts are provided by residues 17–24, 88–92, and 142–145; these read AHIDAGKT, DTPGH, and NKMD.

This sequence belongs to the TRAFAC class translation factor GTPase superfamily. Classic translation factor GTPase family. EF-G/EF-2 subfamily.

The protein resides in the cytoplasm. Functionally, catalyzes the GTP-dependent ribosomal translocation step during translation elongation. During this step, the ribosome changes from the pre-translocational (PRE) to the post-translocational (POST) state as the newly formed A-site-bound peptidyl-tRNA and P-site-bound deacylated tRNA move to the P and E sites, respectively. Catalyzes the coordinated movement of the two tRNA molecules, the mRNA and conformational changes in the ribosome. The protein is Elongation factor G 2 of Cupriavidus metallidurans (strain ATCC 43123 / DSM 2839 / NBRC 102507 / CH34) (Ralstonia metallidurans).